A 70-amino-acid polypeptide reads, in one-letter code: Small ribosomal subunit protein bS21 (70 aa).

It belongs to the bacterial ribosomal protein bS21 family.

The protein is Small ribosomal subunit protein bS21 of Helicobacter hepaticus (strain ATCC 51449 / 3B1).